A 146-amino-acid polypeptide reads, in one-letter code: 3-hydroxyacyl-[acyl-carrier-protein] dehydratase FabZ (146 aa).

Residue His-49 is part of the active site.

It belongs to the thioester dehydratase family. FabZ subfamily.

The protein localises to the cytoplasm. It carries out the reaction a (3R)-hydroxyacyl-[ACP] = a (2E)-enoyl-[ACP] + H2O. Involved in unsaturated fatty acids biosynthesis. Catalyzes the dehydration of short chain beta-hydroxyacyl-ACPs and long chain saturated and unsaturated beta-hydroxyacyl-ACPs. The sequence is that of 3-hydroxyacyl-[acyl-carrier-protein] dehydratase FabZ from Azotobacter vinelandii (strain DJ / ATCC BAA-1303).